Consider the following 334-residue polypeptide: DCN1-like protein 3 (334 aa).

The region spanning 112–301 is the DCUN1 domain; that stretch reads VSHQTLSKLF…LFDDFVDYEK (190 aa). A disordered region spans residues 308–334; that stretch reads SGIHDDDNNNDDPLQSHVKAEDPGLVS. The segment covering 325 to 334 has biased composition (basic and acidic residues); the sequence is VKAEDPGLVS.

Its subcellular location is the cell membrane. Promotes neddylation of cullin components of SCF-type E3 ubiquitin ligase complexes and thus regulates SCF-type complex activity. Function promotes cell proliferation. The protein is DCN1-like protein 3 of Drosophila melanogaster (Fruit fly).